The chain runs to 172 residues: Putative methyltransferase Mtx subunit A (172 aa).

The protein belongs to the MtrA family. In terms of assembly, may be part of a complex composed of 3 subunits; MtxA, MtxH and MtxX.

In Methanosarcina mazei (strain ATCC BAA-159 / DSM 3647 / Goe1 / Go1 / JCM 11833 / OCM 88) (Methanosarcina frisia), this protein is Putative methyltransferase Mtx subunit A (mtxA).